A 163-amino-acid chain; its full sequence is Nucleotide-binding protein YajQ (163 aa).

Belongs to the YajQ family.

Nucleotide-binding protein. In Escherichia coli O81 (strain ED1a), this protein is Nucleotide-binding protein YajQ.